Here is a 686-residue protein sequence, read N- to C-terminus: Delta-like protein 4 (686 aa).

Positions Met-1–Ala-26 are cleaved as a signal peptide. Over Gly-27–Ala-532 the chain is Extracellular. 2 cysteine pairs are disulfide-bonded: Cys-51–Cys-55 and Cys-62–Cys-75. N-linked (GlcNAc...) asparagine glycosylation is found at Asn-79, Asn-109, and Asn-162. Residues Val-174–Cys-218 form the DSL domain. Cys-176 and Cys-185 are oxidised to a cystine. Interaction with Notch1 stretches follow at residues Ser-186 to Leu-188 and Arg-192 to Phe-196. Disulfide bonds link Cys-189–Cys-201, Cys-209–Cys-218, Cys-223–Cys-234, Cys-227–Cys-240, Cys-242–Cys-251, Cys-254–Cys-265, Cys-260–Cys-271, Cys-273–Cys-282, Cys-289–Cys-301, Cys-295–Cys-311, Cys-313–Cys-322, Cys-329–Cys-340, Cys-334–Cys-349, Cys-351–Cys-360, Cys-367–Cys-378, Cys-372–Cys-389, Cys-391–Cys-400, Cys-407–Cys-418, Cys-412–Cys-427, Cys-429–Cys-438, Cys-445–Cys-456, Cys-450–Cys-465, Cys-467–Cys-476, Cys-485–Cys-496, Cys-490–Cys-507, and Cys-509–Cys-518. EGF-like domains follow at residues Asp-219–Asn-252, Glu-253–Asp-283, Asp-285–Glu-323, Gly-325–Glu-361, Thr-364–Glu-401, Lys-403–Glu-439, His-441–Glu-477, and Thr-481–Glu-519. N-linked (GlcNAc...) asparagine glycosylation is present at Asn-297. An N-linked (GlcNAc...) asparagine glycan is attached at Asn-394. A helical membrane pass occupies residues Val-533 to Val-553. At Arg-554 to Val-686 the chain is on the cytoplasmic side.

As to quaternary structure, interacts with NOTCH4. Interacts (via N-terminal DSL and MNNL domains) with NOTCH1 (via EGF-like domains). In terms of tissue distribution, expressed in vascular endothelium. Expressed in retina at least during embryogenesis.

The protein localises to the cell membrane. In terms of biological role, involved in the Notch signaling pathway as Notch ligand. Activates NOTCH1 and NOTCH4. Involved in angiogenesis; negatively regulates endothelial cell proliferation and migration and angiogenic sprouting. Essential for retinal progenitor proliferation. Required for suppressing rod fates in late retinal progenitors as well as for proper generation of other retinal cell types. During spinal cord neurogenesis, inhibits V2a interneuron fate. This chain is Delta-like protein 4 (Dll4), found in Mus musculus (Mouse).